The chain runs to 113 residues: UPF0212 protein AF_0282 (113 aa).

This sequence belongs to the UPF0212 family.

The polypeptide is UPF0212 protein AF_0282 (Archaeoglobus fulgidus (strain ATCC 49558 / DSM 4304 / JCM 9628 / NBRC 100126 / VC-16)).